The following is an 825-amino-acid chain: Protein SEY1 homolog 2 (825 aa).

Residues 1–21 are disordered; that stretch reads MDEVSPTKHFTSKPLLPTKTP. Residues 1–728 lie on the Cytoplasmic side of the membrane; the sequence is MDEVSPTKHF…EKENSEIKYQ (728 aa). Positions 83 to 305 constitute a GB1/RHD3-type G domain; that stretch reads GMDYNAVGIL…FLPQYNKEIP (223 aa). 93–100 contributes to the GTP binding site; the sequence is GAQSSGKS. A coiled-coil region spans residues 373 to 397; it reads KVFTKQIDAALERYKEVTERYMETI. The helical transmembrane segment at 729–749 threads the bilayer; that stretch reads IPLYLIVLVVFFGFDEFIAIL. Topologically, residues 750–752 are lumenal; the sequence is TNP. The helical transmembrane segment at 753 to 773 threads the bilayer; the sequence is LLFILTLIIGGGVYIGYKLNL. Over 774 to 825 the chain is Cytoplasmic; the sequence is GGVAKNYIQYLLSMSLSSTMEYLRTIPFFTPLIDKVWPKDDNNTEETQEEIK.

It belongs to the TRAFAC class dynamin-like GTPase superfamily. GB1/RHD3 GTPase family. RHD3 subfamily.

Its subcellular location is the endoplasmic reticulum membrane. In terms of biological role, probable GTP-binding protein that may be involved in cell development. The protein is Protein SEY1 homolog 2 of Entamoeba histolytica (strain ATCC 30459 / HM-1:IMSS / ABRM).